The primary structure comprises 443 residues: Trigger factor (443 aa).

Residues 164 to 249 (GDVLCVDFVG…AKSLKKAVDP (86 aa)) form the PPIase FKBP-type domain.

The protein belongs to the FKBP-type PPIase family. Tig subfamily.

The protein resides in the cytoplasm. It catalyses the reaction [protein]-peptidylproline (omega=180) = [protein]-peptidylproline (omega=0). Involved in protein export. Acts as a chaperone by maintaining the newly synthesized protein in an open conformation. Functions as a peptidyl-prolyl cis-trans isomerase. This chain is Trigger factor, found in Gluconobacter oxydans (strain 621H) (Gluconobacter suboxydans).